The primary structure comprises 449 residues: Putative tartrate transporter (449 aa).

11 helical membrane-spanning segments follow: residues 34-54 (IVPFIMLLYFIAFLDRVNIGF), 64-84 (GFSSTVFGIGAGIFFVGYFLF), 99-119 (IWIARVMITWGIVSGLMAFVQ), 130-150 (LLGVAEAGFFPGIILYLSFWF), 156-176 (AAVTALFMAAAPLSTVLGSPI), 194-214 (WMFLIEAAPALILGVVVLFFL), 259-279 (VIALALVYFGTSAGLYTLGIW), 292-312 (IEVGFINAVPGIFAVVAMVLW), 336-356 (GLAFAAGATSVFMVLIALTIV), 367-387 (LWSMPTMFLSGPAAAAGIATI), and 414-434 (GGLYFVAGLLLISAILTLILA).

The protein belongs to the major facilitator superfamily. Phthalate permease family.

The protein resides in the cell membrane. Functionally, component of the tartrate utilization system and may allow entry of tartrate and tartrate dehydrogenase. The chain is Putative tartrate transporter (ttuB) from Agrobacterium vitis (Rhizobium vitis).